The primary structure comprises 206 residues: Ribosomal RNA large subunit methyltransferase E (206 aa).

S-adenosyl-L-methionine is bound by residues G60, W62, D80, D96, and D121. K161 acts as the Proton acceptor in catalysis.

This sequence belongs to the class I-like SAM-binding methyltransferase superfamily. RNA methyltransferase RlmE family.

It localises to the cytoplasm. It carries out the reaction uridine(2552) in 23S rRNA + S-adenosyl-L-methionine = 2'-O-methyluridine(2552) in 23S rRNA + S-adenosyl-L-homocysteine + H(+). Its function is as follows. Specifically methylates the uridine in position 2552 of 23S rRNA at the 2'-O position of the ribose in the fully assembled 50S ribosomal subunit. The chain is Ribosomal RNA large subunit methyltransferase E from Hydrogenovibrio crunogenus (strain DSM 25203 / XCL-2) (Thiomicrospira crunogena).